The following is a 167-amino-acid chain: Crossover junction endodeoxyribonuclease RuvC (167 aa).

Catalysis depends on residues D11, E71, and D143. Mg(2+) is bound by residues D11, E71, and D143.

Belongs to the RuvC family. Homodimer which binds Holliday junction (HJ) DNA. The HJ becomes 2-fold symmetrical on binding to RuvC with unstacked arms; it has a different conformation from HJ DNA in complex with RuvA. In the full resolvosome a probable DNA-RuvA(4)-RuvB(12)-RuvC(2) complex forms which resolves the HJ. Mg(2+) is required as a cofactor.

It is found in the cytoplasm. It catalyses the reaction Endonucleolytic cleavage at a junction such as a reciprocal single-stranded crossover between two homologous DNA duplexes (Holliday junction).. The RuvA-RuvB-RuvC complex processes Holliday junction (HJ) DNA during genetic recombination and DNA repair. Endonuclease that resolves HJ intermediates. Cleaves cruciform DNA by making single-stranded nicks across the HJ at symmetrical positions within the homologous arms, yielding a 5'-phosphate and a 3'-hydroxyl group; requires a central core of homology in the junction. The consensus cleavage sequence is 5'-(A/T)TT(C/G)-3'. Cleavage occurs on the 3'-side of the TT dinucleotide at the point of strand exchange. HJ branch migration catalyzed by RuvA-RuvB allows RuvC to scan DNA until it finds its consensus sequence, where it cleaves and resolves the cruciform DNA. The chain is Crossover junction endodeoxyribonuclease RuvC from Bartonella bacilliformis (strain ATCC 35685 / KC583 / Herrer 020/F12,63).